We begin with the raw amino-acid sequence, 149 residues long: Calmodulin (149 aa).

Alanine 2 bears the N-acetylalanine mark. EF-hand domains follow at residues 8–43 (EQIA…LGQN), 44–79 (PTEA…KMKD), 81–116 (DSEE…LGEK), and 117–149 (LTDE…MTAK). Positions 21, 23, 25, 27, 32, 57, 59, 61, 63, 68, 94, 96, 98, 100, and 105 each coordinate Ca(2+). Lysine 116 carries the post-translational modification N6,N6,N6-trimethyllysine. Ca(2+) is bound by residues aspartate 130, aspartate 132, aspartate 134, glutamine 136, and glutamate 141.

Belongs to the calmodulin family.

Its function is as follows. Calmodulin acts as part of a calcium signal transduction pathway by mediating the control of a large number of enzymes, ion channels, aquaporins and other proteins through calcium-binding. Calcium-binding is required for the activation of calmodulin. Among the enzymes to be stimulated by the calmodulin-calcium complex are a number of protein kinases, such as myosin light-chain kinases and calmodulin-dependent protein kinase type II (CaMK2), and phosphatases. This is Calmodulin (calm) from Oreochromis mossambicus (Mozambique tilapia).